A 340-amino-acid chain; its full sequence is Methionine import ATP-binding protein MetN 2 (340 aa).

The region spanning 2–241 is the ABC transporter domain; it reads ITLQNVVKEY…PQEKVTQRFV (240 aa). 38-45 provides a ligand contact to ATP; the sequence is GYSGAGKS.

This sequence belongs to the ABC transporter superfamily. Methionine importer (TC 3.A.1.24) family. As to quaternary structure, the complex is composed of two ATP-binding proteins (MetN), two transmembrane proteins (MetI) and a solute-binding protein (MetQ).

The protein resides in the cell membrane. It catalyses the reaction L-methionine(out) + ATP + H2O = L-methionine(in) + ADP + phosphate + H(+). The catalysed reaction is D-methionine(out) + ATP + H2O = D-methionine(in) + ADP + phosphate + H(+). In terms of biological role, part of the ABC transporter complex MetNIQ involved in methionine import. Responsible for energy coupling to the transport system. The protein is Methionine import ATP-binding protein MetN 2 of Listeria monocytogenes serovar 1/2a (strain ATCC BAA-679 / EGD-e).